The primary structure comprises 339 residues: Ketol-acid reductoisomerase (NADP(+)) (339 aa).

Residues 1–182 (MKVYYDSDAD…GGGRSGVIET (182 aa)) form the KARI N-terminal Rossmann domain. Residues 24–27 (YGSQ), Arg-48, Ser-51, Ser-53, and 83–86 (DEHQ) contribute to the NADP(+) site. His-108 is an active-site residue. Residue Gly-134 participates in NADP(+) binding. The KARI C-terminal knotted domain occupies 183–328 (TFREEVETDL…ARLRKMMPWI (146 aa)). Residues Asp-191, Glu-195, Glu-227, and Glu-231 each coordinate Mg(2+). Ser-252 contributes to the substrate binding site.

It belongs to the ketol-acid reductoisomerase family. The cofactor is Mg(2+).

The enzyme catalyses (2R)-2,3-dihydroxy-3-methylbutanoate + NADP(+) = (2S)-2-acetolactate + NADPH + H(+). It carries out the reaction (2R,3R)-2,3-dihydroxy-3-methylpentanoate + NADP(+) = (S)-2-ethyl-2-hydroxy-3-oxobutanoate + NADPH + H(+). It functions in the pathway amino-acid biosynthesis; L-isoleucine biosynthesis; L-isoleucine from 2-oxobutanoate: step 2/4. It participates in amino-acid biosynthesis; L-valine biosynthesis; L-valine from pyruvate: step 2/4. Functionally, involved in the biosynthesis of branched-chain amino acids (BCAA). Catalyzes an alkyl-migration followed by a ketol-acid reduction of (S)-2-acetolactate (S2AL) to yield (R)-2,3-dihydroxy-isovalerate. In the isomerase reaction, S2AL is rearranged via a Mg-dependent methyl migration to produce 3-hydroxy-3-methyl-2-ketobutyrate (HMKB). In the reductase reaction, this 2-ketoacid undergoes a metal-dependent reduction by NADPH to yield (R)-2,3-dihydroxy-isovalerate. The polypeptide is Ketol-acid reductoisomerase (NADP(+)) (Zymomonas mobilis subsp. mobilis (strain ATCC 31821 / ZM4 / CP4)).